We begin with the raw amino-acid sequence, 279 residues long: NAD kinase (279 aa).

Residue D57 is the Proton acceptor of the active site. NAD(+) contacts are provided by residues D57–G58, N133–E134, R159, D161, and T172–S177.

It belongs to the NAD kinase family. A divalent metal cation serves as cofactor.

The protein resides in the cytoplasm. The catalysed reaction is NAD(+) + ATP = ADP + NADP(+) + H(+). In terms of biological role, involved in the regulation of the intracellular balance of NAD and NADP, and is a key enzyme in the biosynthesis of NADP. Catalyzes specifically the phosphorylation on 2'-hydroxyl of the adenosine moiety of NAD to yield NADP. This chain is NAD kinase, found in Streptococcus pyogenes serotype M28 (strain MGAS6180).